Consider the following 61-residue polypeptide: METIVLLFLLALVFCTLEMGMVEAEHGCPDNEDECHEHCKSIGKSGGYCVGPHKQTCRCNP.

An N-terminal signal peptide occupies residues 1 to 24 (METIVLLFLLALVFCTLEMGMVEA). 3 cysteine pairs are disulfide-bonded: Cys-28–Cys-49, Cys-35–Cys-57, and Cys-39–Cys-59.

Belongs to the invertebrate defensin family. Type 2 subfamily. As to expression, highly expressed in non-venom gland (hemolymph) and moderately expressed in venom gland.

It localises to the secreted. In terms of biological role, antibacterial peptide active against Gram-positive bacteria, but not on Gram-negative bacteria. Also has weak blocking activity on Kv1.1/KCNA1, Kv1.2/KCNA2, Kv1.3/KCNA3, KCa3.1/KCNN4/IK, KCa2.3/KCNN3/SK3 and Kv11.1/KCNH2/ERG1 channels (tested at 1 uM). It inhibits potassium channel current by interacting with the pore region. In Olivierus martensii (Manchurian scorpion), this protein is Defensin BmKDfsin2.